Reading from the N-terminus, the 208-residue chain is Uracil phosphoribosyltransferase (208 aa).

Residues Arg-78, Arg-103, and 130–138 (DPMLATGGS) contribute to the 5-phospho-alpha-D-ribose 1-diphosphate site. Uracil is bound by residues Ile-193 and 198–200 (GDA). Residue Asp-199 participates in 5-phospho-alpha-D-ribose 1-diphosphate binding.

It belongs to the UPRTase family. Requires Mg(2+) as cofactor.

The enzyme catalyses UMP + diphosphate = 5-phospho-alpha-D-ribose 1-diphosphate + uracil. Its pathway is pyrimidine metabolism; UMP biosynthesis via salvage pathway; UMP from uracil: step 1/1. Its activity is regulated as follows. Allosterically activated by GTP. In terms of biological role, catalyzes the conversion of uracil and 5-phospho-alpha-D-ribose 1-diphosphate (PRPP) to UMP and diphosphate. This chain is Uracil phosphoribosyltransferase, found in Shewanella amazonensis (strain ATCC BAA-1098 / SB2B).